A 115-amino-acid chain; its full sequence is Putative membrane protein insertion efficiency factor (115 aa).

The protein belongs to the UPF0161 family.

Its subcellular location is the cell membrane. Could be involved in insertion of integral membrane proteins into the membrane. This is Putative membrane protein insertion efficiency factor from Mycolicibacterium paratuberculosis (strain ATCC BAA-968 / K-10) (Mycobacterium paratuberculosis).